Here is a 319-residue protein sequence, read N- to C-terminus: Acetyl-coenzyme A carboxylase carboxyl transferase subunit alpha (319 aa).

Residues 35–296 enclose the CoA carboxyltransferase C-terminal domain; it reads NLDEEVQRLR…KAQLLADLND (262 aa).

It belongs to the AccA family. As to quaternary structure, acetyl-CoA carboxylase is a heterohexamer composed of biotin carboxyl carrier protein (AccB), biotin carboxylase (AccC) and two subunits each of ACCase subunit alpha (AccA) and ACCase subunit beta (AccD).

The protein localises to the cytoplasm. It carries out the reaction N(6)-carboxybiotinyl-L-lysyl-[protein] + acetyl-CoA = N(6)-biotinyl-L-lysyl-[protein] + malonyl-CoA. The protein operates within lipid metabolism; malonyl-CoA biosynthesis; malonyl-CoA from acetyl-CoA: step 1/1. Component of the acetyl coenzyme A carboxylase (ACC) complex. First, biotin carboxylase catalyzes the carboxylation of biotin on its carrier protein (BCCP) and then the CO(2) group is transferred by the carboxyltransferase to acetyl-CoA to form malonyl-CoA. This chain is Acetyl-coenzyme A carboxylase carboxyl transferase subunit alpha, found in Yersinia pseudotuberculosis serotype O:3 (strain YPIII).